We begin with the raw amino-acid sequence, 578 residues long: Longifolene synthase (578 aa).

Mg(2+)-binding residues include D331, D335, and D475. Positions D331–D335 match the DDXXD motif motif.

It belongs to the terpene synthase family. Tpsd subfamily. Mg(2+) serves as cofactor. Mn(2+) is required as a cofactor.

The catalysed reaction is (2E,6E)-farnesyl diphosphate = longifolene + diphosphate. It participates in sesquiterpene biosynthesis. Its pathway is terpene metabolism; oleoresin biosynthesis. Its function is as follows. Terpene synthase (TPS) involved in the biosynthesis of sesquiterpene natural products included in conifer oleoresin secretions and volatile emissions; these compounds contribute to biotic and abiotic stress defense against herbivores and pathogens. Catalyzes the conversion of (2E,6E)-farnesyl diphosphate (FPP) to longifolene. This is Longifolene synthase from Picea engelmannii x Picea glauca (Hybrid white spruce).